A 591-amino-acid polypeptide reads, in one-letter code: V-type ATP synthase alpha chain (591 aa).

233 to 240 (GPFGAGKT) contacts ATP.

Belongs to the ATPase alpha/beta chains family.

The enzyme catalyses ATP + H2O + 4 H(+)(in) = ADP + phosphate + 5 H(+)(out). In terms of biological role, produces ATP from ADP in the presence of a proton gradient across the membrane. The V-type alpha chain is a catalytic subunit. This Streptococcus pyogenes serotype M49 (strain NZ131) protein is V-type ATP synthase alpha chain.